A 238-amino-acid polypeptide reads, in one-letter code: Ribosomal RNA small subunit methyltransferase G (238 aa).

Residues Gly78, Phe83, 129–130 (AE), and Arg148 contribute to the S-adenosyl-L-methionine site. Residues 216–238 (EKKKETPKKYPRKAGTPAKNPIK) form a disordered region.

It belongs to the methyltransferase superfamily. RNA methyltransferase RsmG family.

It localises to the cytoplasm. Functionally, specifically methylates the N7 position of a guanine in 16S rRNA. The protein is Ribosomal RNA small subunit methyltransferase G of Lactococcus lactis subsp. lactis (strain IL1403) (Streptococcus lactis).